The primary structure comprises 497 residues: Vacuolar fusion protein CCZ1 homolog B (497 aa).

The tract at residues 244-284 (GTSSWSYLRKGSGSPQISSRSTTVPPLGSGGTLPSGNGSST) is disordered.

Belongs to the CCZ1 family. In terms of assembly, interacts with MON1.

The protein resides in the endosome. Its subcellular location is the prevacuolar compartment. Functionally, plays an important role in membrane trafficking through the secretory apparatus. In complex with MON1, acts as a guanine exchange factor (GEF) for RABG3F of the RAB7 protein family. Promotes the exchange of GDP to GTP, converting RABG3F from an inactive GDP-bound form into an active GTP-bound form. The RABG3F active form is involved in protein trafficking from prevacuolar compartments (PVCs) to vacuoles. May serve as a linker between Rab5 and Rab7 protein families in PVCs and mediate PVC maturation. The polypeptide is Vacuolar fusion protein CCZ1 homolog B (Arabidopsis thaliana (Mouse-ear cress)).